The following is a 123-amino-acid chain: Succinate dehydrogenase assembly factor 3, mitochondrial (123 aa).

The transit peptide at 1–31 directs the protein to the mitochondrion; that stretch reads MANPAHISAVRTLYKKILVLHRFLPIDLRAL.

This sequence belongs to the complex I LYR family. SDHAF3 subfamily. Interacts with sdhb within an sdha-sdhb subcomplex.

The protein resides in the mitochondrion matrix. Plays an essential role in the assembly of succinate dehydrogenase (SDH), an enzyme complex (also referred to as respiratory complex II) that is a component of both the tricarboxylic acid (TCA) cycle and the mitochondrial electron transport chain, and which couples the oxidation of succinate to fumarate with the reduction of ubiquinone (coenzyme Q) to ubiquinol. Promotes maturation of the iron-sulfur protein subunit sdhb of the SDH catalytic dimer, protecting it from the deleterious effects of oxidants. May act together with SDHAF1. The polypeptide is Succinate dehydrogenase assembly factor 3, mitochondrial (Danio rerio (Zebrafish)).